We begin with the raw amino-acid sequence, 216 residues long: ATP synthase subunit C lysine N-methyltransferase (216 aa).

M1 carries the N-acetylmethionine modification. The segment covering 1–12 has biased composition (basic and acidic residues); sequence MERGETPEEERQ. Residues 1-25 form a disordered region; that stretch reads MERGETPEEERQSGCVLPTSPESDS. A helical membrane pass occupies residues 31–50; that stretch reads WGFLITGVIGGALVTVYAVT. The segment at 51–85 is required for mitochondrial location; the sequence is TPFIAPALRKVCLPFVPATSRQVENVVKMLQHRRG.

The protein belongs to the ANT/ATPSC lysine N-methyltransferase family.

The protein resides in the mitochondrion membrane. The catalysed reaction is L-lysyl-[protein] + 3 S-adenosyl-L-methionine = N(6),N(6),N(6)-trimethyl-L-lysyl-[protein] + 3 S-adenosyl-L-homocysteine + 3 H(+). Functionally, mitochondrial protein-lysine N-methyltransferase that trimethylates ATP synthase subunit C, ATP5MC1 and ATP5MC2. Trimethylation is required for proper incorporation of the C subunit into the ATP synthase complex and mitochondrial respiration. Promotes chronic pain. Involved in persistent inflammatory and neuropathic pain: methyltransferase activity in the mitochondria of sensory neurons promotes chronic pain via a pathway that depends on the production of reactive oxygen species (ROS) and on the engagement of spinal cord microglia. The protein is ATP synthase subunit C lysine N-methyltransferase (Atpsckmt) of Rattus norvegicus (Rat).